A 97-amino-acid polypeptide reads, in one-letter code: Small ribosomal subunit protein bS20 (97 aa).

It belongs to the bacterial ribosomal protein bS20 family.

Functionally, binds directly to 16S ribosomal RNA. The polypeptide is Small ribosomal subunit protein bS20 (Gloeothece citriformis (strain PCC 7424) (Cyanothece sp. (strain PCC 7424))).